A 308-amino-acid chain; its full sequence is Coenzyme PQQ synthesis protein B (308 aa).

Belongs to the PqqB family.

It participates in cofactor biosynthesis; pyrroloquinoline quinone biosynthesis. Its function is as follows. May be involved in the transport of PQQ or its precursor to the periplasm. The protein is Coenzyme PQQ synthesis protein B of Klebsiella pneumoniae (strain 342).